We begin with the raw amino-acid sequence, 223 residues long: Deoxyribose-phosphate aldolase (223 aa).

Residue aspartate 92 is the Proton donor/acceptor of the active site. Lysine 154 serves as the catalytic Schiff-base intermediate with acetaldehyde. Residue lysine 182 is the Proton donor/acceptor of the active site.

It belongs to the DeoC/FbaB aldolase family. DeoC type 1 subfamily.

The protein localises to the cytoplasm. It catalyses the reaction 2-deoxy-D-ribose 5-phosphate = D-glyceraldehyde 3-phosphate + acetaldehyde. It participates in carbohydrate degradation; 2-deoxy-D-ribose 1-phosphate degradation; D-glyceraldehyde 3-phosphate and acetaldehyde from 2-deoxy-alpha-D-ribose 1-phosphate: step 2/2. Catalyzes a reversible aldol reaction between acetaldehyde and D-glyceraldehyde 3-phosphate to generate 2-deoxy-D-ribose 5-phosphate. This chain is Deoxyribose-phosphate aldolase, found in Haemophilus influenzae (strain ATCC 51907 / DSM 11121 / KW20 / Rd).